Consider the following 693-residue polypeptide: Elongation factor G (693 aa).

One can recognise a tr-type G domain in the interval 8-282 (KNTRNIGIMA…AVIDYLPSPL (275 aa)). GTP-binding positions include 17–24 (AHIDAGKT), 81–85 (DTPGH), and 135–138 (NKMD).

Belongs to the TRAFAC class translation factor GTPase superfamily. Classic translation factor GTPase family. EF-G/EF-2 subfamily.

The protein localises to the cytoplasm. Functionally, catalyzes the GTP-dependent ribosomal translocation step during translation elongation. During this step, the ribosome changes from the pre-translocational (PRE) to the post-translocational (POST) state as the newly formed A-site-bound peptidyl-tRNA and P-site-bound deacylated tRNA move to the P and E sites, respectively. Catalyzes the coordinated movement of the two tRNA molecules, the mRNA and conformational changes in the ribosome. In Staphylococcus epidermidis (strain ATCC 35984 / DSM 28319 / BCRC 17069 / CCUG 31568 / BM 3577 / RP62A), this protein is Elongation factor G.